A 198-amino-acid chain; its full sequence is Guanylate kinase (198 aa).

In terms of domain architecture, Guanylate kinase-like spans 8 to 188; sequence GRVVVLSGPS…ACSELVSLLV (181 aa). Position 15-22 (15-22) interacts with ATP; sequence GPSAVGKS.

It belongs to the guanylate kinase family.

It is found in the cytoplasm. The catalysed reaction is GMP + ATP = GDP + ADP. Its function is as follows. Essential for recycling GMP and indirectly, cGMP. The polypeptide is Guanylate kinase (Mycobacterium sp. (strain MCS)).